A 273-amino-acid polypeptide reads, in one-letter code: HTH-type transcriptional activator RhaS (273 aa).

An HTH araC/xylS-type domain is found at 174-272; the sequence is YQLLDWLQNN…SQSPRDLRSQ (99 aa). 2 consecutive DNA-binding regions (H-T-H motif) follow at residues 191-212 and 239-262; these read PELA…KNKT and VTDI…KREF.

In terms of assembly, binds DNA as a dimer.

The protein localises to the cytoplasm. Activates expression of the rhaBAD and rhaT operons. The polypeptide is HTH-type transcriptional activator RhaS (Yersinia pestis bv. Antiqua (strain Angola)).